The primary structure comprises 182 residues: Dephospho-CoA kinase (182 aa).

Positions 4–182 constitute a DPCK domain; that stretch reads VVAITGGIGS…IINNDHKIMT (179 aa). 12–17 lines the ATP pocket; it reads GSGKTT.

This sequence belongs to the CoaE family.

Its subcellular location is the cytoplasm. The catalysed reaction is 3'-dephospho-CoA + ATP = ADP + CoA + H(+). It functions in the pathway cofactor biosynthesis; coenzyme A biosynthesis; CoA from (R)-pantothenate: step 5/5. Catalyzes the phosphorylation of the 3'-hydroxyl group of dephosphocoenzyme A to form coenzyme A. This Aliivibrio fischeri (strain ATCC 700601 / ES114) (Vibrio fischeri) protein is Dephospho-CoA kinase.